Here is a 236-residue protein sequence, read N- to C-terminus: MAFTFKQFHIDDLNCGMPVSTDGVILGAWAPLAEAKNILDIGAGSGLLSLMAAQRSQGQITAVELEEKAAAACRYNMTQSPWAKRCQLVHGDIQHVCQLAQYQGYFDHIICNPPYFEHGPKASEQHRAMARHTETLGFTPLLDAISQCLSFEGYASLILPIQSLARFKACLNDTALFLVREVWVKSVENKAANRALLLLSKTEVEPYQRTDLTIRGEDGNYTEQMIELTKDFYLKL.

This sequence belongs to the methyltransferase superfamily. tRNA (adenine-N(6)-)-methyltransferase family.

It is found in the cytoplasm. It catalyses the reaction adenosine(37) in tRNA1(Val) + S-adenosyl-L-methionine = N(6)-methyladenosine(37) in tRNA1(Val) + S-adenosyl-L-homocysteine + H(+). Its function is as follows. Specifically methylates the adenine in position 37 of tRNA(1)(Val) (anticodon cmo5UAC). In Shewanella sp. (strain MR-7), this protein is tRNA1(Val) (adenine(37)-N6)-methyltransferase.